Consider the following 395-residue polypeptide: N5-carboxyaminoimidazole ribonucleotide synthase (395 aa).

Residues Lys-109, Lys-149, 184–187 (EEFI), Glu-192, and 268–269 (NE) contribute to the ATP site. The ATP-grasp domain occupies 113–298 (RQLLTRLGLP…QFEQQLRAIA (186 aa)).

The protein belongs to the PurK/PurT family. As to quaternary structure, homodimer.

It carries out the reaction 5-amino-1-(5-phospho-beta-D-ribosyl)imidazole + hydrogencarbonate + ATP = 5-carboxyamino-1-(5-phospho-D-ribosyl)imidazole + ADP + phosphate + 2 H(+). The protein operates within purine metabolism; IMP biosynthesis via de novo pathway; 5-amino-1-(5-phospho-D-ribosyl)imidazole-4-carboxylate from 5-amino-1-(5-phospho-D-ribosyl)imidazole (N5-CAIR route): step 1/2. Catalyzes the ATP-dependent conversion of 5-aminoimidazole ribonucleotide (AIR) and HCO(3)(-) to N5-carboxyaminoimidazole ribonucleotide (N5-CAIR). This is N5-carboxyaminoimidazole ribonucleotide synthase from Synechococcus elongatus (strain ATCC 33912 / PCC 7942 / FACHB-805) (Anacystis nidulans R2).